A 519-amino-acid chain; its full sequence is Ribonuclease Y (519 aa).

The helical transmembrane segment at valine 6–alanine 26 threads the bilayer. The KH domain maps to threonine 209–leucine 272. Positions valine 335–serine 428 constitute an HD domain.

It belongs to the RNase Y family.

It is found in the cell membrane. Functionally, endoribonuclease that initiates mRNA decay. The chain is Ribonuclease Y from Protochlamydia amoebophila (strain UWE25).